Reading from the N-terminus, the 1341-residue chain is DNA-directed RNA polymerase subunit Rpo1N (1341 aa).

Residues Cys62, Cys65, Cys72, His75, Cys102, Cys105, Cys149, and Cys152 each coordinate Zn(2+). Mg(2+)-binding residues include Asp918, Asp920, and Asp922.

It belongs to the RNA polymerase beta' chain family. In terms of assembly, part of the RNA polymerase complex. Mg(2+) is required as a cofactor. It depends on Zn(2+) as a cofactor. Post-translationally, this protein undergoes a protein self splicing that involves a post-translational excision of the intervening region (intein) followed by peptide ligation.

It is found in the cytoplasm. It catalyses the reaction RNA(n) + a ribonucleoside 5'-triphosphate = RNA(n+1) + diphosphate. Functionally, DNA-dependent RNA polymerase (RNAP) catalyzes the transcription of DNA into RNA using the four ribonucleoside triphosphates as substrates. Forms the clamp head domain. The protein is DNA-directed RNA polymerase subunit Rpo1N of Methanocaldococcus jannaschii (strain ATCC 43067 / DSM 2661 / JAL-1 / JCM 10045 / NBRC 100440) (Methanococcus jannaschii).